The primary structure comprises 600 residues: Aspartate--tRNA(Asp/Asn) ligase (600 aa).

Glutamate 174 lines the L-aspartate pocket. Residues 198 to 201 (QLFK) are aspartate. Position 220 (arginine 220) interacts with L-aspartate. Residues 220–222 (RDE) and glutamine 229 each bind ATP. Position 457 (histidine 457) interacts with L-aspartate. Glutamate 491 provides a ligand contact to ATP. Arginine 498 serves as a coordination point for L-aspartate. Residue 543–546 (GLDR) participates in ATP binding.

Belongs to the class-II aminoacyl-tRNA synthetase family. Type 1 subfamily. As to quaternary structure, homodimer.

It is found in the cytoplasm. The catalysed reaction is tRNA(Asx) + L-aspartate + ATP = L-aspartyl-tRNA(Asx) + AMP + diphosphate. Functionally, aspartyl-tRNA synthetase with relaxed tRNA specificity since it is able to aspartylate not only its cognate tRNA(Asp) but also tRNA(Asn). Reaction proceeds in two steps: L-aspartate is first activated by ATP to form Asp-AMP and then transferred to the acceptor end of tRNA(Asp/Asn). The chain is Aspartate--tRNA(Asp/Asn) ligase from Burkholderia lata (strain ATCC 17760 / DSM 23089 / LMG 22485 / NCIMB 9086 / R18194 / 383).